A 1627-amino-acid chain; its full sequence is Pleckstrin homology domain-containing family G member 4B (1627 aa).

6 disordered regions span residues tyrosine 211–arginine 349, leucine 381–valine 475, valine 501–aspartate 537, serine 959–proline 1008, threonine 1049–leucine 1111, and proline 1124–serine 1159. Residues glycine 241–serine 251 are compositionally biased toward polar residues. Basic and acidic residues-rich tracts occupy residues glutamine 262 to glutamate 273 and glutamate 310 to lysine 322. The span at arginine 465–alanine 474 shows a compositional bias: gly residues. Over residues proline 975–arginine 985 the composition is skewed to basic and acidic residues. Residues serine 1057–alanine 1068 show a composition bias toward polar residues. The span at arginine 1070–lysine 1081 shows a compositional bias: basic residues. 2 stretches are compositionally biased toward polar residues: residues proline 1101 to leucine 1111 and proline 1133 to serine 1144. In terms of domain architecture, DH spans arginine 1161–leucine 1340. A PH domain is found at asparagine 1352–tryptophan 1460. The segment at lysine 1519–glutamine 1558 is disordered. The segment covering threonine 1521 to aspartate 1535 has biased composition (polar residues). The span at serine 1545 to glutamine 1558 shows a compositional bias: low complexity.

As to quaternary structure, found in a complex with ARHGEF11 and ARHGEF12; binding to ARHGEF11 and ARHGEF12 enhances CDC42 GEF activity of PLEKHG4B, and PLEKHG4B, in turn, inhibits ARHGEF11- and ARHGEF12-mediated RHOA activation. Interacts with ANXA2; this interaction is required for PLEKHG4B localization to cell-cell adhesions.

The protein resides in the basal cell membrane. The protein localises to the cell junction. It localises to the nucleus. It is found in the cytoplasm. In terms of biological role, guanine nucleotide exchange factor (GEF) which specifically activates small GTPase CDC42 by exchanging bound GDP for free GTP. Plays a role in actin cytoskeletal remodeling in the late stage of cell-cell junction formation by regulating the contractility of actin filaments, which prompts the conversion from 'open' to 'closed' junctions. In Homo sapiens (Human), this protein is Pleckstrin homology domain-containing family G member 4B.